The chain runs to 397 residues: Flavohemoprotein (397 aa).

The region spanning 4–140 is the Globin domain; the sequence is SFSPHTITLI…IANLLKDREA (137 aa). H87 is a heme b binding site. Catalysis depends on charge relay system residues Y97 and E139. A reductase region spans residues 151-397; the sequence is GGWIHWRRFV…FGPMDEEMAA (247 aa). The region spanning 154-258 is the FAD-binding FR-type domain; sequence IHWRRFVISK…TPPVGDFFLP (105 aa). Residues Y192 and 207-210 each bind FAD; that span reads RNYS. NADP(+) is bound at residue 271 to 276; it reads GVGLTP. 387–390 provides a ligand contact to FAD; that stretch reads FFGP.

Belongs to the globin family. Two-domain flavohemoproteins subfamily. The protein in the C-terminal section; belongs to the flavoprotein pyridine nucleotide cytochrome reductase family. The cofactor is heme b. FAD serves as cofactor.

The enzyme catalyses 2 nitric oxide + NADPH + 2 O2 = 2 nitrate + NADP(+) + H(+). It carries out the reaction 2 nitric oxide + NADH + 2 O2 = 2 nitrate + NAD(+) + H(+). Functionally, is involved in NO detoxification in an aerobic process, termed nitric oxide dioxygenase (NOD) reaction that utilizes O(2) and NAD(P)H to convert NO to nitrate, which protects the bacterium from various noxious nitrogen compounds. Therefore, plays a central role in the inducible response to nitrosative stress. The sequence is that of Flavohemoprotein from Xylella fastidiosa (strain Temecula1 / ATCC 700964).